Consider the following 343-residue polypeptide: Phosphoribosylformylglycinamidine cyclo-ligase (343 aa).

The protein belongs to the AIR synthase family.

The protein resides in the cytoplasm. The catalysed reaction is 2-formamido-N(1)-(5-O-phospho-beta-D-ribosyl)acetamidine + ATP = 5-amino-1-(5-phospho-beta-D-ribosyl)imidazole + ADP + phosphate + H(+). The protein operates within purine metabolism; IMP biosynthesis via de novo pathway; 5-amino-1-(5-phospho-D-ribosyl)imidazole from N(2)-formyl-N(1)-(5-phospho-D-ribosyl)glycinamide: step 2/2. The chain is Phosphoribosylformylglycinamidine cyclo-ligase from Rippkaea orientalis (strain PCC 8801 / RF-1) (Cyanothece sp. (strain PCC 8801)).